The following is a 670-amino-acid chain: DNA ligase (670 aa).

NAD(+)-binding positions include Asp33–Asp37, Ser82–Leu83, and Glu114. The active-site N6-AMP-lysine intermediate is the Lys116. NAD(+) contacts are provided by Arg137, Glu174, Lys291, and Lys315. The Zn(2+) site is built by Cys409, Cys412, Cys427, and Cys433. The 78-residue stretch at Asp593 to Ser670 folds into the BRCT domain.

The protein belongs to the NAD-dependent DNA ligase family. LigA subfamily. Requires Mg(2+) as cofactor. Mn(2+) is required as a cofactor.

It carries out the reaction NAD(+) + (deoxyribonucleotide)n-3'-hydroxyl + 5'-phospho-(deoxyribonucleotide)m = (deoxyribonucleotide)n+m + AMP + beta-nicotinamide D-nucleotide.. In terms of biological role, DNA ligase that catalyzes the formation of phosphodiester linkages between 5'-phosphoryl and 3'-hydroxyl groups in double-stranded DNA using NAD as a coenzyme and as the energy source for the reaction. It is essential for DNA replication and repair of damaged DNA. The sequence is that of DNA ligase from Vibrio atlanticus (strain LGP32) (Vibrio splendidus (strain Mel32)).